Reading from the N-terminus, the 73-residue chain is Large ribosomal subunit protein bL31 (73 aa).

4 residues coordinate Zn(2+): Cys16, Cys18, Cys38, and Cys41.

Belongs to the bacterial ribosomal protein bL31 family. Type A subfamily. As to quaternary structure, part of the 50S ribosomal subunit. Zn(2+) is required as a cofactor.

Functionally, binds the 23S rRNA. This Vibrio parahaemolyticus serotype O3:K6 (strain RIMD 2210633) protein is Large ribosomal subunit protein bL31.